Reading from the N-terminus, the 235-residue chain is Uridylate kinase (235 aa).

9 to 12 (KLSG) is a binding site for ATP. The involved in allosteric activation by GTP stretch occupies residues 17–22 (GNQGYG). Residue Gly-51 coordinates UMP. The ATP site is built by Gly-52 and Arg-56. UMP contacts are provided by residues Asp-71 and 132 to 139 (CGNPFFTT). ATP contacts are provided by Thr-159, Tyr-165, and Asp-168.

This sequence belongs to the UMP kinase family. As to quaternary structure, homohexamer.

The protein resides in the cytoplasm. It carries out the reaction UMP + ATP = UDP + ADP. Its pathway is pyrimidine metabolism; CTP biosynthesis via de novo pathway; UDP from UMP (UMPK route): step 1/1. Allosterically activated by GTP. Inhibited by UTP. Catalyzes the reversible phosphorylation of UMP to UDP. The polypeptide is Uridylate kinase (Synechococcus sp. (strain CC9311)).